The chain runs to 402 residues: UDP-glucose 6-dehydrogenase (402 aa).

NAD(+)-binding positions include 2–19 (KIAVAGSGYVGLSLGVLL), valine 11, aspartate 29, lysine 34, threonine 83, threonine 118, and glutamate 145. Substrate is bound by residues 141–145 (EFLRE), lysine 204, asparagine 208, 249–253 (YNNPS), and glycine 257. NAD(+) is bound at residue tyrosine 259. Cysteine 260 serves as the catalytic Nucleophile. Lysine 263 provides a ligand contact to NAD(+). Lysine 320 serves as a coordination point for substrate. Arginine 327 is a binding site for NAD(+).

Belongs to the UDP-glucose/GDP-mannose dehydrogenase family.

It catalyses the reaction UDP-alpha-D-glucose + 2 NAD(+) + H2O = UDP-alpha-D-glucuronate + 2 NADH + 3 H(+). It functions in the pathway nucleotide-sugar biosynthesis; UDP-alpha-D-glucuronate biosynthesis; UDP-alpha-D-glucuronate from UDP-alpha-D-glucose: step 1/1. Functionally, catalyzes the formation of UDP-glucuronic acid which is required for capsular hyaluronic acid synthesis. This chain is UDP-glucose 6-dehydrogenase (hasB), found in Streptococcus pyogenes serotype M1.